We begin with the raw amino-acid sequence, 313 residues long: Small ribosomal subunit protein uS2 (313 aa).

Positions 234 to 243 (DEEAKEEKTK) are enriched in basic and acidic residues. Residues 234–313 (DEEAKEEKTK…ASKAEAEEGK (80 aa)) form a disordered region. A compositionally biased stretch (basic residues) spans 244 to 256 (AKTTAKKVVTKKA). Positions 266–297 (AEKKSEKPTTEKRPTKEAAETKETSEEPKTKE) are enriched in basic and acidic residues.

It belongs to the universal ribosomal protein uS2 family.

The polypeptide is Small ribosomal subunit protein uS2 (Coxiella burnetii (strain Dugway 5J108-111)).